The following is a 146-amino-acid chain: 3-hydroxyacyl-[acyl-carrier-protein] dehydratase FabZ (146 aa).

Histidine 51 is an active-site residue.

This sequence belongs to the thioester dehydratase family. FabZ subfamily.

The protein localises to the cytoplasm. It catalyses the reaction a (3R)-hydroxyacyl-[ACP] = a (2E)-enoyl-[ACP] + H2O. Functionally, involved in unsaturated fatty acids biosynthesis. Catalyzes the dehydration of short chain beta-hydroxyacyl-ACPs and long chain saturated and unsaturated beta-hydroxyacyl-ACPs. This Staphylococcus aureus (strain Mu3 / ATCC 700698) protein is 3-hydroxyacyl-[acyl-carrier-protein] dehydratase FabZ.